Here is a 75-residue protein sequence, read N- to C-terminus: Protein CYSTEINE-RICH TRANSMEMBRANE MODULE 5 (75 aa).

The interval 1-29 (MSQYSQNQYAGAYPTPPVSTGPYVAPPPL) is disordered. The span at 14–29 (PTPPVSTGPYVAPPPL) shows a compositional bias: pro residues. A helical membrane pass occupies residues 52–69 (AADGFLKGCLATMLACCV).

This sequence belongs to the CYSTM1 family. In terms of assembly, heterodimers. Interacts with CYSTM7 and WIH1/CYSTM13. Mostly expressed in roots, stems, rosette leaves and siliques and, to a lower extent, in flowers and cauline leaves.

Its subcellular location is the cell membrane. The protein localises to the nucleus. Functionally, involved in resistance to abiotic stress. The protein is Protein CYSTEINE-RICH TRANSMEMBRANE MODULE 5 of Arabidopsis thaliana (Mouse-ear cress).